We begin with the raw amino-acid sequence, 125 residues long: MNKEEILEAIKNMTVLELAELVKALEEEFGVSAAAPVAVAAAPAAGAPAAAPAEEKTEFDVILQEVGSDKIKVIKVVREVTGLGLKEAKDLVESAPKPVKEGVSKDEANQIKAKFEEVGAKVEIK.

The protein belongs to the bacterial ribosomal protein bL12 family. In terms of assembly, homodimer. Part of the ribosomal stalk of the 50S ribosomal subunit. Forms a multimeric L10(L12)X complex, where L10 forms an elongated spine to which 2 to 4 L12 dimers bind in a sequential fashion. Binds GTP-bound translation factors.

In terms of biological role, forms part of the ribosomal stalk which helps the ribosome interact with GTP-bound translation factors. Is thus essential for accurate translation. The protein is Large ribosomal subunit protein bL12 of Thermoanaerobacter pseudethanolicus (strain ATCC 33223 / 39E) (Clostridium thermohydrosulfuricum).